A 1080-amino-acid chain; its full sequence is Headcase protein (1080 aa).

7 disordered regions span residues 1-27, 181-277, 310-335, 655-693, 798-826, 891-916, and 940-974; these read MAPRRNSNISSSGNSTQQQHQQQLQQQ, IYLN…GNNG, SLSSSGAGSGSTSPSDSQSSGEISVS, PLESPVGTGATTTQVPNAQGSPTASGCSSNTIASKQPPK, SKYQQQQHQQQQQQRQQQHNLQPQQQHAT, SGCSSGSGSQPSLSPTASSNGNDGSK, and QRQQPPQQQVPQQQPHAASPTASLTSSSSSSNGWS. Residues 181–197 show a composition bias toward polar residues; sequence IYLNGSGNRPTLANGSL. Over residues 218 to 228 the composition is skewed to gly residues; sequence NGGGGGGGAGV. The span at 232–251 shows a compositional bias: polar residues; the sequence is TKTPLSNNNGNSYAGLTPNP. Residues 263–277 are compositionally biased toward low complexity; that stretch reads NNGNTASNGSSGNNG. Polar residues predominate over residues 663-688; sequence GATTTQVPNAQGSPTASGCSSNTIAS. A compositionally biased stretch (low complexity) spans 801-826; sequence QQQQHQQQQQQRQQQHNLQPQQQHAT. The span at 900–913 shows a compositional bias: polar residues; it reads QPSLSPTASSNGND. Low complexity predominate over residues 941–974; it reads RQQPPQQQVPQQQPHAASPTASLTSSSSSSNGWS.

In terms of tissue distribution, expressed in all imaginal cells of the embryo and larvae. Expressed in a subset of tracheal fusion cells from stage 14 to the end of embryogenesis in metameres 2-9, lateral trunk and ventral anastomoses.

Its subcellular location is the cytoplasm. Its function is as follows. Required for imaginal cell differentiation, may be involved in hormonal responsiveness during metamorphosis. Involved in an inhibitory signaling mechanism to determine the number of cells that will form unicellular sprouts in the trachea. Regulated by transcription factor esg. The longer hdc protein is completely functional and the shorter protein carries some function. The polypeptide is Headcase protein (Drosophila melanogaster (Fruit fly)).